The following is a 117-amino-acid chain: Large ribosomal subunit protein bL20 (117 aa).

This sequence belongs to the bacterial ribosomal protein bL20 family.

Binds directly to 23S ribosomal RNA and is necessary for the in vitro assembly process of the 50S ribosomal subunit. It is not involved in the protein synthesizing functions of that subunit. This Rippkaea orientalis (strain PCC 8801 / RF-1) (Cyanothece sp. (strain PCC 8801)) protein is Large ribosomal subunit protein bL20.